The sequence spans 129 residues: Large ribosomal subunit protein uL22 (129 aa).

This sequence belongs to the universal ribosomal protein uL22 family. As to quaternary structure, part of the 50S ribosomal subunit.

Functionally, this protein binds specifically to 23S rRNA; its binding is stimulated by other ribosomal proteins, e.g. L4, L17, and L20. It is important during the early stages of 50S assembly. It makes multiple contacts with different domains of the 23S rRNA in the assembled 50S subunit and ribosome. Its function is as follows. The globular domain of the protein is located near the polypeptide exit tunnel on the outside of the subunit, while an extended beta-hairpin is found that lines the wall of the exit tunnel in the center of the 70S ribosome. The protein is Large ribosomal subunit protein uL22 of Brucella abortus (strain 2308).